An 827-amino-acid polypeptide reads, in one-letter code: Xanthomonalisin (827 aa).

Positions 1–23 (MKIEKTALTVAIALAMSSLSAHA) are cleaved as a signal peptide. Residues 24-237 (EDAWVSTHTQ…GPNVGTQAAA (214 aa)) constitute a propeptide, removed in mature form. A Peptidase S53 domain is found at 241 to 625 (AHHPQDFAAI…GKLNTYAQAN (385 aa)). Active-site charge relay system residues include E312, D316, and S544. Ca(2+) is bound by residues D585, V586, A601, G603, and D605. The 88-residue stretch at 635-722 (TNAPPVANFS…VTVSSSGGTG (88 aa)) folds into the PKD domain. The propeptide at 636 to 827 (NAPPVANFSV…GVSLKATWTN (192 aa)) is removed in mature form.

It depends on Ca(2+) as a cofactor. Autocatalytically processed.

Its subcellular location is the secreted. The enzyme catalyses Cleavage of casein.. With respect to regulation, inhibited by 1,2-epoxy-3-(p-nitrophenoxy)propane (EPNP), but not by pepstatin, pepstatin Ac (S-PI) and diazoacetyl-DL-norleucine methyl ester (DAN). Not inhibited by metal ions. Functionally, pepstatin-insensitive serine-carboxyl proteinase. Shows activity on acid-denatured hemoglobin and on casein. The chain is Xanthomonalisin from Xanthomonas sp. (strain T-22).